The primary structure comprises 447 residues: Phosphoglucosamine mutase (447 aa).

Serine 102 acts as the Phosphoserine intermediate in catalysis. Mg(2+) contacts are provided by serine 102, aspartate 241, aspartate 243, and aspartate 245. Serine 102 carries the post-translational modification Phosphoserine.

This sequence belongs to the phosphohexose mutase family. Mg(2+) is required as a cofactor. Post-translationally, activated by phosphorylation.

The enzyme catalyses alpha-D-glucosamine 1-phosphate = D-glucosamine 6-phosphate. Catalyzes the conversion of glucosamine-6-phosphate to glucosamine-1-phosphate. The sequence is that of Phosphoglucosamine mutase from Hamiltonella defensa subsp. Acyrthosiphon pisum (strain 5AT).